Here is a 972-residue protein sequence, read N- to C-terminus: Leucine--tRNA ligase (972 aa).

Residues 78 to 89 (PYPSGDGLHVGH) carry the 'HIGH' region motif. The 'KMSKS' region signature appears at 741–745 (KIGKS). An ATP-binding site is contributed by lysine 744.

The protein belongs to the class-I aminoacyl-tRNA synthetase family.

The protein resides in the cytoplasm. It catalyses the reaction tRNA(Leu) + L-leucine + ATP = L-leucyl-tRNA(Leu) + AMP + diphosphate. This chain is Leucine--tRNA ligase, found in Mycobacterium leprae (strain Br4923).